A 215-amino-acid polypeptide reads, in one-letter code: Cytochrome b6 (215 aa).

A helical transmembrane segment spans residues 32–52; it reads IFYCLGGITLTCFLVQVATGF. C35 serves as a coordination point for heme c. Residues H86 and H100 each contribute to the heme b site. Helical transmembrane passes span 90-110, 116-136, and 186-206; these read ASMM…TGGF, LTWI…VTGY, and LHTF…FLMI. Residues H187 and H202 each coordinate heme b.

This sequence belongs to the cytochrome b family. PetB subfamily. As to quaternary structure, the 4 large subunits of the cytochrome b6-f complex are cytochrome b6, subunit IV (17 kDa polypeptide, PetD), cytochrome f and the Rieske protein, while the 4 small subunits are PetG, PetL, PetM and PetN. The complex functions as a dimer. Requires heme b as cofactor. Heme c is required as a cofactor.

It is found in the plastid. The protein resides in the chloroplast thylakoid membrane. Functionally, component of the cytochrome b6-f complex, which mediates electron transfer between photosystem II (PSII) and photosystem I (PSI), cyclic electron flow around PSI, and state transitions. This chain is Cytochrome b6, found in Psilotum nudum (Whisk fern).